The chain runs to 312 residues: Glyoxylate/hydroxypyruvate reductase A (312 aa).

Residue Arg227 is part of the active site. His275 functions as the Proton donor in the catalytic mechanism.

Belongs to the D-isomer specific 2-hydroxyacid dehydrogenase family. GhrA subfamily.

Its subcellular location is the cytoplasm. The catalysed reaction is glycolate + NADP(+) = glyoxylate + NADPH + H(+). It carries out the reaction (R)-glycerate + NAD(+) = 3-hydroxypyruvate + NADH + H(+). The enzyme catalyses (R)-glycerate + NADP(+) = 3-hydroxypyruvate + NADPH + H(+). In terms of biological role, catalyzes the NADPH-dependent reduction of glyoxylate and hydroxypyruvate into glycolate and glycerate, respectively. The protein is Glyoxylate/hydroxypyruvate reductase A of Enterobacter sp. (strain 638).